The chain runs to 535 residues: MRNQDKRAAHKDSEPSTEVNHTASSYQGRQQETGMNLRGIDGNEPTEGSNLLNNNEKMQGTPAEPNHLQRRRQIHACPPRGLLARVITNVTMVILLWAVVWSVTGSECLPGGNLFGIIMLFYCAIIGGKLFGLIKLPTLPPLPPLLGMLLAGFLIRNVPVISDNIQIKHKWSSALRSIALSVILVRAGLGLDSNALKKLKGVCVRLSLGPCLIEACTSAVLAYFLMGLPWQWGFMLGFVLGAVSPAVVVPSMLLLQEGGYGVEKGIPTLLMAAGSFDDILAITGFNTCLGMAFSTGSTVFNVLKGVLEVIIGVVTGLVLGFFIQYFPSSDQDNLVWKRAFLVLGLSVLAVFSSTYFGFPGSGGLCTLVTAFLAGRGWASTKTDVEKVIAVAWDIFQPLLFGLIGAEVLITALRPETIGLCVATLGIAVLIRILVTYLMVCFAGFNIKEKIFISFAWLPKATVQAAIGSVALDTARSHGEKQLEGYGMDVLTVAFLSIIITAPVGSLLIGLLGPRLLQKAEQNKDEEDQGETSIQV.

Positions 1-14 are enriched in basic and acidic residues; the sequence is MRNQDKRAAHKDSE. Residues 1-70 are disordered; that stretch reads MRNQDKRAAH…TPAEPNHLQR (70 aa). Over 1-85 the chain is Cytoplasmic; it reads MRNQDKRAAH…ACPPRGLLAR (85 aa). Composition is skewed to polar residues over residues 16-34 and 46-58; these read STEV…QETG and TEGS…NEKM. Residues 86-103 traverse the membrane as a helical segment; sequence VITNVTMVILLWAVVWSV. Residues 104–112 are Extracellular-facing; the sequence is TGSECLPGG. The chain crosses the membrane as a helical span at residues 113-132; it reads NLFGIIMLFYCAIIGGKLFG. The Cytoplasmic portion of the chain corresponds to 133 to 143; it reads LIKLPTLPPLP. A helical transmembrane segment spans residues 144 to 160; the sequence is PLLGMLLAGFLIRNVPV. Residues 161–170 lie on the Extracellular side of the membrane; the sequence is ISDNIQIKHK. Residues 171 to 188 form a helical membrane-spanning segment; the sequence is WSSALRSIALSVILVRAG. Over 189–199 the chain is Cytoplasmic; that stretch reads LGLDSNALKKL. The chain crosses the membrane as a helical span at residues 200-226; sequence KGVCVRLSLGPCLIEACTSAVLAYFLM. The Extracellular segment spans residues 227 to 232; the sequence is GLPWQW. The chain crosses the membrane as a helical span at residues 233 to 241; the sequence is GFMLGFVLG. The Cytoplasmic portion of the chain corresponds to 242–269; that stretch reads AVSPAVVVPSMLLLQEGGYGVEKGIPTL. 4 residues coordinate Na(+): valine 243, glycine 274, aspartate 277, and aspartate 278. Residues 270–289 form a helical membrane-spanning segment; the sequence is LMAAGSFDDILAITGFNTCL. The Extracellular segment spans residues 290 to 299; the sequence is GMAFSTGSTV. Residues 300–323 traverse the membrane as a helical segment; sequence FNVLKGVLEVIIGVVTGLVLGFFI. The Cytoplasmic portion of the chain corresponds to 324-338; it reads QYFPSSDQDNLVWKR. The helical transmembrane segment at 339–356 threads the bilayer; that stretch reads AFLVLGLSVLAVFSSTYF. Topologically, residues 357–360 are extracellular; sequence GFPG. The chain crosses the membrane as a helical span at residues 361-372; that stretch reads SGGLCTLVTAFL. The Cytoplasmic portion of the chain corresponds to 373–389; it reads AGRGWASTKTDVEKVIA. The helical transmembrane segment at 390 to 410 threads the bilayer; sequence VAWDIFQPLLFGLIGAEVLIT. Residues 411–416 lie on the Extracellular side of the membrane; that stretch reads ALRPET. Residues 417–439 traverse the membrane as a helical segment; the sequence is IGLCVATLGIAVLIRILVTYLMV. Residues 440 to 460 lie on the Cytoplasmic side of the membrane; sequence CFAGFNIKEKIFISFAWLPKA. The helical transmembrane segment at 461-472 threads the bilayer; that stretch reads TVQAAIGSVALD. At 473-485 the chain is on the extracellular side; the sequence is TARSHGEKQLEGY. The helical transmembrane segment at 486–508 threads the bilayer; the sequence is GMDVLTVAFLSIIITAPVGSLLI. The Cytoplasmic portion of the chain corresponds to 509-535; it reads GLLGPRLLQKAEQNKDEEDQGETSIQV.

It belongs to the monovalent cation:proton antiporter 1 (CPA1) transporter (TC 2.A.36) family. As to quaternary structure, homodimer; dimerization is essential for SLC9B2 activity. Lipids seem to play a role in the stabilization of the dimerization subdomain.

The protein resides in the cell membrane. It localises to the mitochondrion membrane. Its subcellular location is the endosome membrane. The protein localises to the recycling endosome membrane. It is found in the lysosome membrane. The protein resides in the cytoplasmic vesicle. It localises to the secretory vesicle. Its subcellular location is the synaptic vesicle membrane. The protein localises to the cell projection. It is found in the cilium. The protein resides in the flagellum membrane. It localises to the basolateral cell membrane. Its subcellular location is the apical cell membrane. It catalyses the reaction Li(+)(out) + H(+)(in) = Li(+)(in) + H(+)(out). The catalysed reaction is Li(+)(in) + Na(+)(out) = Li(+)(out) + Na(+)(in). It carries out the reaction Na(+)(in) + H(+)(out) = Na(+)(out) + H(+)(in). Its activity is regulated as follows. Allosterically inhibited by the N-terminal domain. Inhibited by phloretin. Functionally, electroneutral Na(+) Li(+)/H(+) antiporter that extrudes Na(+) or Li(+) in exchange for external protons across the membrane. Uses the proton gradient/membrane potential to extrude sodium. Contributes to the regulation of intracellular pH and sodium homeostasis. Also able to mediate Na(+)/Li(+) antiporter activity in kidney. May play a physiological role in renal tubular function and blood pressure homeostasis. Plays an important role for insulin secretion and clathrin-mediated endocytosis in beta-cells. Involved in sperm motility and fertility. It is controversial whether SLC9B2 plays a role in osteoclast differentiation or not. The chain is Sodium/hydrogen exchanger 9B2 (SLC9B2) from Bison bison bison (North American plains bison).